Here is a 447-residue protein sequence, read N- to C-terminus: Protein CLT1, chloroplastic (447 aa).

Residues 1–48 (MATTSSDRLIAGLTASIGSIESRYANPAQSVSLICRNQINGAPPIVLR) constitute a chloroplast transit peptide. A run of 10 helical transmembrane segments spans residues 103 to 123 (MEIV…RVLY), 135 to 155 (FFLA…ILYF), 172 to 192 (LPFL…MAAA), 200 to 220 (TTVL…IFLG), 228 to 248 (ILGC…GSGA), 256 to 276 (GILW…DTVM), 304 to 324 (IFQV…WGIP), 351 to 371 (GAPL…ISLL), 387 to 407 (TVSV…LGVA), and 413 to 433 (GFVA…WTPS).

This sequence belongs to the CRT-like transporter family.

It is found in the plastid. The protein resides in the chloroplast membrane. Functionally, involved in thiol transport from the plastid to the cytosol. Transports probably both glutathione (GSH) and its precursor, gamma-glutamylcysteine (gamma-EC). Exhibits some functional redundancy with CLT3 in maintaining the root GSH pool. In Arabidopsis thaliana (Mouse-ear cress), this protein is Protein CLT1, chloroplastic.